Here is a 200-residue protein sequence, read N- to C-terminus: HTH-type transcriptional repressor KstR2 (200 aa).

An HTH tetR-type domain is found at 9 to 69; sequence NSRRGELLEL…ELLRGFLDWL (61 aa). Residues 32-51 constitute a DNA-binding region (H-T-H motif); it reads TVRDIADGAGILSGSLYHHF.

In terms of assembly, homodimer.

Its function is as follows. Controls the expression of a small regulon that may play a role in the utilization of cholesterol. The protein is HTH-type transcriptional repressor KstR2 (kstR2) of Mycobacterium tuberculosis (strain CDC 1551 / Oshkosh).